The following is a 117-amino-acid chain: UPF0125 protein VV0820 (117 aa).

The interval Arg90–Asp117 is disordered.

Belongs to the UPF0125 (RnfH) family.

This is UPF0125 protein VV0820 from Vibrio vulnificus (strain YJ016).